Reading from the N-terminus, the 280-residue chain is 4-diphosphocytidyl-2-C-methyl-D-erythritol kinase (280 aa).

Lys-8 is an active-site residue. An ATP-binding site is contributed by 91-101; that stretch reads PVSAGLAGGSS. Asp-133 is a catalytic residue.

This sequence belongs to the GHMP kinase family. IspE subfamily.

The catalysed reaction is 4-CDP-2-C-methyl-D-erythritol + ATP = 4-CDP-2-C-methyl-D-erythritol 2-phosphate + ADP + H(+). It functions in the pathway isoprenoid biosynthesis; isopentenyl diphosphate biosynthesis via DXP pathway; isopentenyl diphosphate from 1-deoxy-D-xylulose 5-phosphate: step 3/6. Functionally, catalyzes the phosphorylation of the position 2 hydroxy group of 4-diphosphocytidyl-2C-methyl-D-erythritol. In Clostridium novyi (strain NT), this protein is 4-diphosphocytidyl-2-C-methyl-D-erythritol kinase.